Consider the following 241-residue polypeptide: 1-(5-phosphoribosyl)-5-[(5-phosphoribosylamino)methylideneamino] imidazole-4-carboxamide isomerase (241 aa).

Residue aspartate 8 is the Proton acceptor of the active site. Aspartate 127 (proton donor) is an active-site residue.

This sequence belongs to the HisA/HisF family.

It localises to the cytoplasm. It catalyses the reaction 1-(5-phospho-beta-D-ribosyl)-5-[(5-phospho-beta-D-ribosylamino)methylideneamino]imidazole-4-carboxamide = 5-[(5-phospho-1-deoxy-D-ribulos-1-ylimino)methylamino]-1-(5-phospho-beta-D-ribosyl)imidazole-4-carboxamide. It participates in amino-acid biosynthesis; L-histidine biosynthesis; L-histidine from 5-phospho-alpha-D-ribose 1-diphosphate: step 4/9. This is 1-(5-phosphoribosyl)-5-[(5-phosphoribosylamino)methylideneamino] imidazole-4-carboxamide isomerase from Thermotoga petrophila (strain ATCC BAA-488 / DSM 13995 / JCM 10881 / RKU-1).